The primary structure comprises 365 residues: NAC domain-containing protein 43 (365 aa).

One can recognise an NAC domain in the interval 16 to 180 (VPPGFRFHPT…GWVVCRIFKK (165 aa)). The DNA-binding element occupies 116-186 (IGMRKTLVFY…IFKKKNLHKT (71 aa)).

Expressed in various aboveground tissues undergoing thickening of the lignified secondary wall such as anthers, filaments of stamens, the base of carpels, styles, the boundaries between siliques and pedicels, the midrib of leaf veins, and inflorescence stems, specifically in interfascicular fibers (sclerenchyma), cells differentiating into vascular vessels, and xylary fibers (secondary xylem).

Its subcellular location is the nucleus. In terms of biological role, transcription activator of genes involved in biosynthesis of secondary walls. Together with NST2 and NST3, required for the secondary cell wall thickening of sclerenchymatous fibers, secondary xylem (tracheary elements), and of the anther endocethium, which is necessary for anther dehiscence. May also regulate the secondary cell wall lignification of other tissues. This chain is NAC domain-containing protein 43 (NAC043), found in Arabidopsis thaliana (Mouse-ear cress).